Reading from the N-terminus, the 159-residue chain is MVGGLTHVDEKGVKMVEIGYKDVVFRKAVAKGRIKLKPETVKLIKEGKIEKGNVLATAQIAGILAVKRTPELIPLCHPIPITGVDITFDFGEDYIEVTCEVRAYYKTGVEMEALTGVTVALLAIWDMVKAVEKDEKGQYPYTRIENVHVVEKVKTHNSQ.

Substrate contacts are provided by residues 75–77 and 111–112; these read LCH and ME. The active site involves Asp126.

It belongs to the MoaC family. Homohexamer; trimer of dimers.

The catalysed reaction is (8S)-3',8-cyclo-7,8-dihydroguanosine 5'-triphosphate = cyclic pyranopterin phosphate + diphosphate. It functions in the pathway cofactor biosynthesis; molybdopterin biosynthesis. Its function is as follows. Catalyzes the conversion of (8S)-3',8-cyclo-7,8-dihydroguanosine 5'-triphosphate to cyclic pyranopterin monophosphate (cPMP). The polypeptide is Probable cyclic pyranopterin monophosphate synthase (Pyrococcus horikoshii (strain ATCC 700860 / DSM 12428 / JCM 9974 / NBRC 100139 / OT-3)).